We begin with the raw amino-acid sequence, 264 residues long: Small ribosomal subunit protein uS3 (264 aa).

The region spanning 39-107 (VREYLKKKLK…PVHVNIEEIR (69 aa)) is the KH type-2 domain. The segment at 214-264 (PVETAAPREEERRPRRAPRGDRPDGARNGRPGGGRGRAPRKADAAPAPEGE) is disordered. Residues 219–240 (APREEERRPRRAPRGDRPDGAR) show a composition bias toward basic and acidic residues.

This sequence belongs to the universal ribosomal protein uS3 family. As to quaternary structure, part of the 30S ribosomal subunit. Forms a tight complex with proteins S10 and S14.

In terms of biological role, binds the lower part of the 30S subunit head. Binds mRNA in the 70S ribosome, positioning it for translation. This Bordetella avium (strain 197N) protein is Small ribosomal subunit protein uS3.